A 331-amino-acid polypeptide reads, in one-letter code: Ketol-acid reductoisomerase (NADP(+)) (331 aa).

A KARI N-terminal Rossmann domain is found at 2–182 (ARMYYDADAQ…GGTRAGILET (181 aa)). Residues 25-28 (YGSQ), Ser-51, Ser-53, and 83-86 (DEVQ) contribute to the NADP(+) site. His-108 is an active-site residue. Gly-134 provides a ligand contact to NADP(+). One can recognise a KARI C-terminal knotted domain in the interval 183 to 328 (TFREETETDL…QELRSMFSWL (146 aa)). Residues Asp-191, Glu-195, Glu-227, and Glu-231 each coordinate Mg(2+). A substrate-binding site is contributed by Ser-252.

This sequence belongs to the ketol-acid reductoisomerase family. It depends on Mg(2+) as a cofactor.

The catalysed reaction is (2R)-2,3-dihydroxy-3-methylbutanoate + NADP(+) = (2S)-2-acetolactate + NADPH + H(+). It carries out the reaction (2R,3R)-2,3-dihydroxy-3-methylpentanoate + NADP(+) = (S)-2-ethyl-2-hydroxy-3-oxobutanoate + NADPH + H(+). It participates in amino-acid biosynthesis; L-isoleucine biosynthesis; L-isoleucine from 2-oxobutanoate: step 2/4. It functions in the pathway amino-acid biosynthesis; L-valine biosynthesis; L-valine from pyruvate: step 2/4. Involved in the biosynthesis of branched-chain amino acids (BCAA). Catalyzes an alkyl-migration followed by a ketol-acid reduction of (S)-2-acetolactate (S2AL) to yield (R)-2,3-dihydroxy-isovalerate. In the isomerase reaction, S2AL is rearranged via a Mg-dependent methyl migration to produce 3-hydroxy-3-methyl-2-ketobutyrate (HMKB). In the reductase reaction, this 2-ketoacid undergoes a metal-dependent reduction by NADPH to yield (R)-2,3-dihydroxy-isovalerate. The polypeptide is Ketol-acid reductoisomerase (NADP(+)) (Thermosynechococcus vestitus (strain NIES-2133 / IAM M-273 / BP-1)).